Consider the following 702-residue polypeptide: Ribosomal RNA large subunit methyltransferase K/L (702 aa).

The 112-residue stretch at 43 to 154 (LIYQSLMWSR…KETASIALDL (112 aa)) folds into the THUMP domain.

The protein belongs to the methyltransferase superfamily. RlmKL family.

It localises to the cytoplasm. The enzyme catalyses guanosine(2445) in 23S rRNA + S-adenosyl-L-methionine = N(2)-methylguanosine(2445) in 23S rRNA + S-adenosyl-L-homocysteine + H(+). It carries out the reaction guanosine(2069) in 23S rRNA + S-adenosyl-L-methionine = N(2)-methylguanosine(2069) in 23S rRNA + S-adenosyl-L-homocysteine + H(+). In terms of biological role, specifically methylates the guanine in position 2445 (m2G2445) and the guanine in position 2069 (m7G2069) of 23S rRNA. The polypeptide is Ribosomal RNA large subunit methyltransferase K/L (Salmonella arizonae (strain ATCC BAA-731 / CDC346-86 / RSK2980)).